A 219-amino-acid polypeptide reads, in one-letter code: Phosphatidylserine decarboxylase proenzyme (219 aa).

Serine 188 serves as the catalytic Schiff-base intermediate with substrate; via pyruvic acid. Serine 188 bears the Pyruvic acid (Ser); by autocatalysis mark.

The protein belongs to the phosphatidylserine decarboxylase family. PSD-A subfamily. Heterodimer of a large membrane-associated beta subunit and a small pyruvoyl-containing alpha subunit. Pyruvate serves as cofactor. Is synthesized initially as an inactive proenzyme. Formation of the active enzyme involves a self-maturation process in which the active site pyruvoyl group is generated from an internal serine residue via an autocatalytic post-translational modification. Two non-identical subunits are generated from the proenzyme in this reaction, and the pyruvate is formed at the N-terminus of the alpha chain, which is derived from the carboxyl end of the proenzyme. The post-translation cleavage follows an unusual pathway, termed non-hydrolytic serinolysis, in which the side chain hydroxyl group of the serine supplies its oxygen atom to form the C-terminus of the beta chain, while the remainder of the serine residue undergoes an oxidative deamination to produce ammonia and the pyruvoyl prosthetic group on the alpha chain.

It is found in the cell membrane. The catalysed reaction is a 1,2-diacyl-sn-glycero-3-phospho-L-serine + H(+) = a 1,2-diacyl-sn-glycero-3-phosphoethanolamine + CO2. It participates in phospholipid metabolism; phosphatidylethanolamine biosynthesis; phosphatidylethanolamine from CDP-diacylglycerol: step 2/2. Functionally, catalyzes the formation of phosphatidylethanolamine (PtdEtn) from phosphatidylserine (PtdSer). This is Phosphatidylserine decarboxylase proenzyme from Geobacter sp. (strain M21).